The sequence spans 365 residues: tRNA/tmRNA (uracil-C(5))-methyltransferase (365 aa).

Residues glutamine 189, tyrosine 217, asparagine 222, glutamate 238, and aspartate 298 each coordinate S-adenosyl-L-methionine. Catalysis depends on cysteine 323, which acts as the Nucleophile. Residue glutamate 357 is the Proton acceptor of the active site.

The protein belongs to the class I-like SAM-binding methyltransferase superfamily. RNA M5U methyltransferase family. TrmA subfamily.

The enzyme catalyses uridine(54) in tRNA + S-adenosyl-L-methionine = 5-methyluridine(54) in tRNA + S-adenosyl-L-homocysteine + H(+). The catalysed reaction is uridine(341) in tmRNA + S-adenosyl-L-methionine = 5-methyluridine(341) in tmRNA + S-adenosyl-L-homocysteine + H(+). Dual-specificity methyltransferase that catalyzes the formation of 5-methyluridine at position 54 (m5U54) in all tRNAs, and that of position 341 (m5U341) in tmRNA (transfer-mRNA). In Shewanella sediminis (strain HAW-EB3), this protein is tRNA/tmRNA (uracil-C(5))-methyltransferase.